The chain runs to 280 residues: Tryptophan synthase alpha chain (280 aa).

Catalysis depends on proton acceptor residues Glu-49 and Asp-60.

Belongs to the TrpA family. In terms of assembly, tetramer of two alpha and two beta chains.

The catalysed reaction is (1S,2R)-1-C-(indol-3-yl)glycerol 3-phosphate + L-serine = D-glyceraldehyde 3-phosphate + L-tryptophan + H2O. It participates in amino-acid biosynthesis; L-tryptophan biosynthesis; L-tryptophan from chorismate: step 5/5. In terms of biological role, the alpha subunit is responsible for the aldol cleavage of indoleglycerol phosphate to indole and glyceraldehyde 3-phosphate. This Corynebacterium glutamicum (strain ATCC 13032 / DSM 20300 / JCM 1318 / BCRC 11384 / CCUG 27702 / LMG 3730 / NBRC 12168 / NCIMB 10025 / NRRL B-2784 / 534) protein is Tryptophan synthase alpha chain.